The following is a 124-amino-acid chain: Fluoride-specific ion channel FluC (124 aa).

Transmembrane regions (helical) follow at residues 1 to 21 (MIGVTLAVAVGGALGCLLRFA), 34 to 54 (FYAATLAVNIAGCLLIGYLYG), 62 to 82 (VPLALRAGLIAGFLGGLTTFS), and 101 to 121 (FSYLAFSVLGGLLATWAGLIL). Na(+) is bound by residues Gly-76 and Thr-79.

It belongs to the fluoride channel Fluc/FEX (TC 1.A.43) family.

The protein localises to the cell inner membrane. The catalysed reaction is fluoride(in) = fluoride(out). Its activity is regulated as follows. Na(+) is not transported, but it plays an essential structural role and its presence is essential for fluoride channel function. In terms of biological role, fluoride-specific ion channel. Important for reducing fluoride concentration in the cell, thus reducing its toxicity. This is Fluoride-specific ion channel FluC from Azotobacter vinelandii (strain DJ / ATCC BAA-1303).